Consider the following 507-residue polypeptide: Glucose transporter type 3 (507 aa).

Positions 1–26 (MRKGGIQDAEPVEPPQSSRKSGTWFA) are disordered. Residues 1–53 (MRKGGIQDAEPVEPPQSSRKSGTWFAKRPSEMPERHVERAPVRQKINNVGLYK) lie on the Cytoplasmic side of the membrane. Residues 54-74 (ATLYSNIGSFFFGIAVGWSGT) form a helical membrane-spanning segment. Residues 75–95 (AERSVMEQHSYSFQPTELQWS) are Extracellular-facing. Residues 96-116 (GVCILLTLGAALWCLPMGLMV) traverse the membrane as a helical segment. Over 117–124 (RLLGCRRT) the chain is Cytoplasmic. The chain crosses the membrane as a helical span at residues 125–145 (ILIQLLPNFLGWFLTVFARSV). The Extracellular segment spans residues 146-152 (PMLYAGR). The chain crosses the membrane as a helical span at residues 153 to 173 (FFLGMCGGAHCVVVPIYNAEI). Residues 174–183 (STTKKRGAMG) lie on the Cytoplasmic side of the membrane. The helical transmembrane segment at 184-204 (VVFEGACICGVIYSFAMSLFL) threads the bilayer. Residues 205–207 (ELR) lie on the Extracellular side of the membrane. A helical membrane pass occupies residues 208-228 (IINFVNLGLLALGPLQILMPE). Over 229-293 (SPAYYVDHGN…YKKVRRSLAR (65 aa)) the chain is Cytoplasmic. A helical transmembrane segment spans residues 294-314 (SLAIALLQKLCGALIFIFYGL). Residues 315-324 (NMLDCLRIRR) lie on the Extracellular side of the membrane. A helical transmembrane segment spans residues 325-345 (EFGLILCLGLILGFLACFFLV). Topologically, residues 346 to 351 (DRLGRR) are cytoplasmic. A helical transmembrane segment spans residues 352 to 372 (PLLIFSSAGIVFVSIYLGLHF). Residues 373–374 (KV) lie on the Extracellular side of the membrane. The helical transmembrane segment at 375–395 (WMTMGLTVMSWIALFCIAIFV) threads the bilayer. At 396–420 (GCYTAGVGSLTWVLNAELLVRPMRP) the chain is on the cytoplasmic side. A helical membrane pass occupies residues 421–441 (LGCSIVCAFNWLTAFFVICWF). Over 442–450 (GSHGVKCQP) the chain is Extracellular. Residues 451–471 (YLFLLFAIIASLILLFSLIYI) form a helical membrane-spanning segment. Topologically, residues 472–507 (PETKKLSSAKIQQRLGGLINRPAVITFTSSSDSSNA) are cytoplasmic.

This sequence belongs to the major facilitator superfamily. Sugar transporter (TC 2.A.1.1) family. Glucose transporter subfamily.

The protein resides in the cell membrane. It localises to the perikaryon. Its subcellular location is the cell projection. Facilitative glucose transporter that can also mediate the uptake of various other monosaccharides across the cell membrane. This chain is Glucose transporter type 3 (Glut3), found in Drosophila melanogaster (Fruit fly).